Consider the following 177-residue polypeptide: Small ribosomal subunit protein uS4 (177 aa).

One can recognise an S4 RNA-binding domain in the interval 104–166 (RRLQTIVYKK…PTSPFKQHPP (63 aa)). The disordered stretch occupies residues 158 to 177 (TSPFKQHPPTQQGEENVQQA). Positions 165 to 177 (PPTQQGEENVQQA) are enriched in polar residues.

Belongs to the universal ribosomal protein uS4 family. Part of the 30S ribosomal subunit. Contacts protein S5. The interaction surface between S4 and S5 is involved in control of translational fidelity.

Functionally, one of the primary rRNA binding proteins, it binds directly to 16S rRNA where it nucleates assembly of the body of the 30S subunit. Its function is as follows. With S5 and S12 plays an important role in translational accuracy. This chain is Small ribosomal subunit protein uS4, found in Sulfurisphaera tokodaii (strain DSM 16993 / JCM 10545 / NBRC 100140 / 7) (Sulfolobus tokodaii).